The chain runs to 254 residues: Long form salivary protein D7LC (254 aa).

Positions 1–19 (MNAVITSLLFLSLVGLGYS) are cleaved as a signal peptide. Intrachain disulfides connect cysteine 36-cysteine 66 and cysteine 62-cysteine 112. Tryptophan 49 contributes to the thromboxane A2 binding site. Tryptophan 52 lines the leukotriene C4 pocket. Residue tyrosine 63 participates in thromboxane A2 binding. Leukotriene C4 contacts are provided by glycine 136 and lysine 154. Residue lysine 154 participates in thromboxane A2 binding. 3 disulfide bridges follow: cysteine 162-cysteine 178, cysteine 174-cysteine 221, and cysteine 211-cysteine 230.

It belongs to the PBP/GOBP family.

It is found in the secreted. Its function is as follows. Modulates blood feeding of female sandflies on vertebrate species by binding and sequestering different mediators involved in the host response. Binds leukotriene C4, leukotriene D4, leukotriene E4 and U-46619, a stable analog of thromboxane A2. Does not bind histamine or serotonin. Inhibits platelet aggregation induced by low concentrations of collagen in thromboxane A2-dependent manner. The protein is Long form salivary protein D7LC of Phlebotomus papatasi (Sandfly).